Reading from the N-terminus, the 584-residue chain is Putative sel1-like repeat-containing protein L18 (584 aa).

Sel1-like repeat units follow at residues S132–N167, K168–F203, S204–H237, S238–L273, N274–G309, and E316–N351.

The polypeptide is Putative sel1-like repeat-containing protein L18 (Acanthamoeba polyphaga (Amoeba)).